We begin with the raw amino-acid sequence, 207 residues long: Dephospho-CoA kinase (207 aa).

Residues 10 to 207 (ILGLTGGIGS…FYLTLKGGQP (198 aa)) form the DPCK domain. 18–23 (GSGKSA) is an ATP binding site.

The protein belongs to the CoaE family.

The protein resides in the cytoplasm. It catalyses the reaction 3'-dephospho-CoA + ATP = ADP + CoA + H(+). The protein operates within cofactor biosynthesis; coenzyme A biosynthesis; CoA from (R)-pantothenate: step 5/5. Functionally, catalyzes the phosphorylation of the 3'-hydroxyl group of dephosphocoenzyme A to form coenzyme A. The protein is Dephospho-CoA kinase of Pseudomonas putida (strain ATCC 47054 / DSM 6125 / CFBP 8728 / NCIMB 11950 / KT2440).